A 431-amino-acid chain; its full sequence is tRNA(Ile)-lysidine synthase (431 aa).

ATP is bound at residue 25 to 30 (SGGPDS).

The protein belongs to the tRNA(Ile)-lysidine synthase family.

It localises to the cytoplasm. It carries out the reaction cytidine(34) in tRNA(Ile2) + L-lysine + ATP = lysidine(34) in tRNA(Ile2) + AMP + diphosphate + H(+). In terms of biological role, ligates lysine onto the cytidine present at position 34 of the AUA codon-specific tRNA(Ile) that contains the anticodon CAU, in an ATP-dependent manner. Cytidine is converted to lysidine, thus changing the amino acid specificity of the tRNA from methionine to isoleucine. In Lactobacillus gasseri (strain ATCC 33323 / DSM 20243 / BCRC 14619 / CIP 102991 / JCM 1131 / KCTC 3163 / NCIMB 11718 / NCTC 13722 / AM63), this protein is tRNA(Ile)-lysidine synthase.